The sequence spans 129 residues: Lysozyme C (129 aa).

The region spanning 1–129 is the C-type lysozyme domain; that stretch reads KIYKRCELAA…VSTWIKDCKL (129 aa). 4 disulfides stabilise this stretch: C6-C127, C30-C115, C64-C80, and C76-C94. Catalysis depends on residues E35 and D52.

It belongs to the glycosyl hydrolase 22 family. As to quaternary structure, monomer.

It is found in the secreted. It catalyses the reaction Hydrolysis of (1-&gt;4)-beta-linkages between N-acetylmuramic acid and N-acetyl-D-glucosamine residues in a peptidoglycan and between N-acetyl-D-glucosamine residues in chitodextrins.. Functionally, lysozymes have primarily a bacteriolytic function; those in tissues and body fluids are associated with the monocyte-macrophage system and enhance the activity of immunoagents. In Ortalis vetula (Plain chachalaca), this protein is Lysozyme C (LYZ).